We begin with the raw amino-acid sequence, 384 residues long: FAD-dependent urate hydroxylase (384 aa).

FAD-binding positions include Gly-11, 30–31 (EA), Ser-43, and Val-125. Substrate-binding positions include Asn-178, Arg-204, and 216-218 (YFF). FAD-binding positions include Asp-285 and 295 to 299 (GQGGC).

Belongs to the FAD-dependent urate hydroxylase family. The cofactor is FAD.

The enzyme catalyses urate + NADH + O2 + H(+) = 5-hydroxyisourate + NAD(+) + H2O. It functions in the pathway purine metabolism; urate degradation. Functionally, catalyzes the hydroxylation of uric acid to 5-hydroxyisourate. The sequence is that of FAD-dependent urate hydroxylase (hpxO) from Klebsiella oxytoca.